The chain runs to 502 residues: Glutamate--tRNA ligase (502 aa).

A 'HIGH' region motif is present at residues 9 to 19; sequence PSPTGFPHVGT. Positions 250 to 254 match the 'KMSKS' region motif; that stretch reads KLSKR. Lys253 lines the ATP pocket.

The protein belongs to the class-I aminoacyl-tRNA synthetase family. Glutamate--tRNA ligase type 1 subfamily. As to quaternary structure, monomer.

It localises to the cytoplasm. It catalyses the reaction tRNA(Glu) + L-glutamate + ATP = L-glutamyl-tRNA(Glu) + AMP + diphosphate. In terms of biological role, catalyzes the attachment of glutamate to tRNA(Glu) in a two-step reaction: glutamate is first activated by ATP to form Glu-AMP and then transferred to the acceptor end of tRNA(Glu). The protein is Glutamate--tRNA ligase of Acinetobacter baylyi (strain ATCC 33305 / BD413 / ADP1).